The chain runs to 252 residues: MLKYHFPNVCEDELINIYSYGDFKGQGKYICLFKIENQSFLFWRNDKGNKIYTNLESISVEIINTNNTYNQSQNVCPQDLVDTYNQSQNVCPQDLVDTYNQSQNVCPQDLVDTYNQSQNVCPQDLVDTYNQSQNVCPQDLVDTYNQSQNVCPQDLVDTYNQSQNVYTQDLIDTYNQSQNVCPQDLVDTYNQSQNVCPQDLVDTYNQSQNVCPQDLVDTYNQSQNVCPQDLNVYTQDLIDTYNQSQNCDCGCK.

10 tandem repeats follow at residues 68-82 (TYNQ…DLVD), 83-97 (TYNQ…DLVD), 98-112 (TYNQ…DLVD), 113-127 (TYNQ…DLVD), 128-142 (TYNQ…DLVD), 143-157 (TYNQ…DLVD), 158-172 (TYNQ…DLID), 173-187 (TYNQ…DLVD), 188-202 (TYNQ…DLVD), and 203-217 (TYNQ…DLVD). The tract at residues 68–246 (TYNQSQNVCP…LIDTYNQSQN (179 aa)) is 13 X 15 AA tandem repeats. The stretch at 218 to 230 (TYNQSQNVCPQDL) is one 11; truncated repeat. A 12; truncated repeat occupies 231 to 239 (NVYTQDLID). The 13; truncated repeat unit spans residues 240-246 (TYNQSQN).

In terms of biological role, a protein probably derived from this gene is found in cuboidal crystalline inclusions, but is not toxic even when coexpressed with upstream ORF1. The protein runs anomalously as a 50 kDa band in gels. This is an uncharacterized protein from Bacillus thuringiensis subsp. kurstaki.